The following is a 382-amino-acid chain: S-adenosylmethionine synthase (382 aa).

His16 contributes to the ATP binding site. Asp18 lines the Mg(2+) pocket. Glu44 is a K(+) binding site. Glu57 and Gln100 together coordinate L-methionine. The interval 100–110 (QSADIAIGVDE) is flexible loop. ATP-binding positions include 165–167 (DAK), Asp240, 246–247 (RK), Ala263, and Lys267. An L-methionine-binding site is contributed by Asp240. Residue Lys271 participates in L-methionine binding.

Belongs to the AdoMet synthase family. As to quaternary structure, homotetramer; dimer of dimers. It depends on Mg(2+) as a cofactor. Requires K(+) as cofactor.

Its subcellular location is the cytoplasm. The enzyme catalyses L-methionine + ATP + H2O = S-adenosyl-L-methionine + phosphate + diphosphate. Its pathway is amino-acid biosynthesis; S-adenosyl-L-methionine biosynthesis; S-adenosyl-L-methionine from L-methionine: step 1/1. Functionally, catalyzes the formation of S-adenosylmethionine (AdoMet) from methionine and ATP. The overall synthetic reaction is composed of two sequential steps, AdoMet formation and the subsequent tripolyphosphate hydrolysis which occurs prior to release of AdoMet from the enzyme. This chain is S-adenosylmethionine synthase, found in Alcanivorax borkumensis (strain ATCC 700651 / DSM 11573 / NCIMB 13689 / SK2).